The sequence spans 399 residues: Argininosuccinate synthase (399 aa).

8 to 16 (AYSGGLDTT) provides a ligand contact to ATP. An L-citrulline-binding site is contributed by Tyr-87. Gly-117 lines the ATP pocket. The L-aspartate site is built by Thr-119, Asn-123, and Asp-124. Asn-123 provides a ligand contact to L-citrulline. Arg-127, Ser-175, Glu-259, and Tyr-271 together coordinate L-citrulline.

The protein belongs to the argininosuccinate synthase family. Type 1 subfamily. Homotetramer.

It is found in the cytoplasm. It carries out the reaction L-citrulline + L-aspartate + ATP = 2-(N(omega)-L-arginino)succinate + AMP + diphosphate + H(+). It functions in the pathway amino-acid biosynthesis; L-arginine biosynthesis; L-arginine from L-ornithine and carbamoyl phosphate: step 2/3. The sequence is that of Argininosuccinate synthase from Corynebacterium urealyticum (strain ATCC 43042 / DSM 7109).